Here is a 448-residue protein sequence, read N- to C-terminus: MAHVGDCTQTPWLPVLVVSLMCSARAEYSNCGENEYYNQTTGLCQECPPCGPGEEPYLSCGYGTKDEDYGCVPCPAEKFSKGGYQICRRHKDCEGFFRATVLTPGDMENDAECGPCLPGYYMLENRPRNIYGMVCYSCLLAPPNTKECVGATSGASANFPGTSGSSTLSPFQHAHKELSGQGHLATALIIAMSTIFIMAIAIVLIIMFYILKTKPSAPACCTSHPGKSVEAQVSKDEEKKEAPDNVVMFSEKDEFEKLTATPAKPTKSENDASSENEQLLSRSVDSDEEPAPDKQGSPELCLLSLVHLAREKSATSNKSAGIQSRRKKILDVYANVCGVVEGLSPTELPFDCLEKTSRMLSSTYNSEKAVVKTWRHLAESFGLKRDEIGGMTDGMQLFDRISTAGYSIPELLTKLVQIERLDAVESLCADILEWAGVVPPASQPHAAS.

The signal sequence occupies residues 1–26; the sequence is MAHVGDCTQTPWLPVLVVSLMCSARA. The Extracellular segment spans residues 27–187; sequence EYSNCGENEY…LSGQGHLATA (161 aa). 3 TNFR-Cys repeats span residues 30 to 71, 73 to 113, and 115 to 148; these read NCGE…DYGC, PCPA…DAEC, and PCLP…TKEC. 6 disulfides stabilise this stretch: Cys-31–Cys-44, Cys-47–Cys-60, Cys-50–Cys-71, Cys-74–Cys-87, Cys-93–Cys-113, and Cys-135–Cys-148. Asn-38 carries an N-linked (GlcNAc...) asparagine glycan. The helical transmembrane segment at 188 to 208 threads the bilayer; sequence LIIAMSTIFIMAIAIVLIIMF. At 209-448 the chain is on the cytoplasmic side; sequence YILKTKPSAP…PPASQPHAAS (240 aa). The tract at residues 220–297 is disordered; the sequence is CCTSHPGKSV…EEPAPDKQGS (78 aa). The segment covering 233-243 has biased composition (basic and acidic residues); it reads VSKDEEKKEAP. Over residues 271 to 283 the composition is skewed to polar residues; it reads DASSENEQLLSRS. The Death domain occupies 358–431; the sequence is RMLSSTYNSE…DAVESLCADI (74 aa).

As to quaternary structure, binds to EDARADD. Associates with TRAF1, TRAF2, TRAF3 and NIK. Detected in fetal kidney, lung, skin and cultured neonatal epidermal keratinocytes. Not detected in lymphoblast and fibroblast cell lines.

It is found in the membrane. Receptor for EDA isoform A1, but not for EDA isoform A2. Mediates the activation of NF-kappa-B and JNK. May promote caspase-independent cell death. The protein is Tumor necrosis factor receptor superfamily member EDAR (EDAR) of Homo sapiens (Human).